Here is a 260-residue protein sequence, read N- to C-terminus: Phosphate import ATP-binding protein PstB 1 (260 aa).

The region spanning 13–255 is the ABC transporter domain; the sequence is VRVRDLNLWY…PHTKKAEDYI (243 aa). Position 45–52 (45–52) interacts with ATP; the sequence is GPSGCGKS.

It belongs to the ABC transporter superfamily. Phosphate importer (TC 3.A.1.7) family. The complex is composed of two ATP-binding proteins (PstB), two transmembrane proteins (PstC and PstA) and a solute-binding protein (PstS).

Its subcellular location is the cell inner membrane. The catalysed reaction is phosphate(out) + ATP + H2O = ADP + 2 phosphate(in) + H(+). In terms of biological role, part of the ABC transporter complex PstSACB involved in phosphate import. Responsible for energy coupling to the transport system. The protein is Phosphate import ATP-binding protein PstB 1 of Chromohalobacter salexigens (strain ATCC BAA-138 / DSM 3043 / CIP 106854 / NCIMB 13768 / 1H11).